A 117-amino-acid chain; its full sequence is Minor capsid protein p17 (117 aa).

An N-linked (GlcNAc...) asparagine; by host glycan is attached at N12. Residues 39–59 (AILLGILILLVIILIIVAIVY) traverse the membrane as a helical segment. A disordered region spans residues 96–117 (KNSTSQQSHIPSDEQLAELAHS). N97 carries N-linked (GlcNAc...) asparagine; by host glycosylation.

It belongs to the asfivirus minor capsid protein p17 family. In terms of assembly, interacts with the minor capsid protein M1249L and with the hexon capsid protein p72 capsomers; these interactions form a rigid zipper structure that stabilizes the capsomers. Interacts with host STING1.

It localises to the virion membrane. It is found in the host endoplasmic reticulum membrane. Functionally, together with the penton and the other minor capsid proteins (M1249L, p49), forms a complicated network immediately below the outer capsid shell, stabilizing the whole capsid. Three copies of p17 encircle each p72 capsomer in the inner capsid shell, anchoring p72 capsomers on the inner membrane. Required for the assembly of the capsid and icosahedral morphogenesis. Additionally, inhibits the host cGAS-STING pathway through its interaction with STING1 and subsequent interference of the recruitment of downstream components TBK1 and IKBKE. This is Minor capsid protein p17 from African swine fever virus (isolate Warthog/Namibia/Wart80/1980) (ASFV).